The chain runs to 155 residues: Endoribonuclease YbeY (155 aa).

Zn(2+)-binding residues include H114, H118, and H124.

This sequence belongs to the endoribonuclease YbeY family. Zn(2+) serves as cofactor.

The protein localises to the cytoplasm. Its function is as follows. Single strand-specific metallo-endoribonuclease involved in late-stage 70S ribosome quality control and in maturation of the 3' terminus of the 16S rRNA. In Tolumonas auensis (strain DSM 9187 / NBRC 110442 / TA 4), this protein is Endoribonuclease YbeY.